Here is a 314-residue protein sequence, read N- to C-terminus: 4-hydroxy-3-methylbut-2-enyl diphosphate reductase (314 aa).

Cys-12 is a [4Fe-4S] cluster binding site. (2E)-4-hydroxy-3-methylbut-2-enyl diphosphate-binding residues include His-41 and His-74. Dimethylallyl diphosphate is bound by residues His-41 and His-74. His-41 and His-74 together coordinate isopentenyl diphosphate. Cys-96 provides a ligand contact to [4Fe-4S] cluster. His-124 contributes to the (2E)-4-hydroxy-3-methylbut-2-enyl diphosphate binding site. His-124 is a dimethylallyl diphosphate binding site. An isopentenyl diphosphate-binding site is contributed by His-124. Glu-126 (proton donor) is an active-site residue. Residue Thr-167 participates in (2E)-4-hydroxy-3-methylbut-2-enyl diphosphate binding. [4Fe-4S] cluster is bound at residue Cys-197. Residues Ser-225, Ser-226, Asn-227, and Ser-269 each coordinate (2E)-4-hydroxy-3-methylbut-2-enyl diphosphate. The dimethylallyl diphosphate site is built by Ser-225, Ser-226, Asn-227, and Ser-269. Isopentenyl diphosphate contacts are provided by Ser-225, Ser-226, Asn-227, and Ser-269.

The protein belongs to the IspH family. The cofactor is [4Fe-4S] cluster.

The enzyme catalyses isopentenyl diphosphate + 2 oxidized [2Fe-2S]-[ferredoxin] + H2O = (2E)-4-hydroxy-3-methylbut-2-enyl diphosphate + 2 reduced [2Fe-2S]-[ferredoxin] + 2 H(+). It carries out the reaction dimethylallyl diphosphate + 2 oxidized [2Fe-2S]-[ferredoxin] + H2O = (2E)-4-hydroxy-3-methylbut-2-enyl diphosphate + 2 reduced [2Fe-2S]-[ferredoxin] + 2 H(+). Its pathway is isoprenoid biosynthesis; dimethylallyl diphosphate biosynthesis; dimethylallyl diphosphate from (2E)-4-hydroxy-3-methylbutenyl diphosphate: step 1/1. It functions in the pathway isoprenoid biosynthesis; isopentenyl diphosphate biosynthesis via DXP pathway; isopentenyl diphosphate from 1-deoxy-D-xylulose 5-phosphate: step 6/6. Catalyzes the conversion of 1-hydroxy-2-methyl-2-(E)-butenyl 4-diphosphate (HMBPP) into a mixture of isopentenyl diphosphate (IPP) and dimethylallyl diphosphate (DMAPP). Acts in the terminal step of the DOXP/MEP pathway for isoprenoid precursor biosynthesis. The protein is 4-hydroxy-3-methylbut-2-enyl diphosphate reductase of Haemophilus ducreyi (strain 35000HP / ATCC 700724).